We begin with the raw amino-acid sequence, 276 residues long: Dermonecrotic toxin LlSicTox-alphaIV2i (276 aa).

Residue H5 is part of the active site. Mg(2+) contacts are provided by E25 and D27. Residue H41 is the Nucleophile of the active site. Cystine bridges form between C45/C51 and C47/C193. Residue D85 coordinates Mg(2+).

This sequence belongs to the arthropod phospholipase D family. Class II subfamily. The cofactor is Mg(2+). As to expression, expressed by the venom gland.

Its subcellular location is the secreted. It catalyses the reaction an N-(acyl)-sphingosylphosphocholine = an N-(acyl)-sphingosyl-1,3-cyclic phosphate + choline. The enzyme catalyses an N-(acyl)-sphingosylphosphoethanolamine = an N-(acyl)-sphingosyl-1,3-cyclic phosphate + ethanolamine. The catalysed reaction is a 1-acyl-sn-glycero-3-phosphocholine = a 1-acyl-sn-glycero-2,3-cyclic phosphate + choline. It carries out the reaction a 1-acyl-sn-glycero-3-phosphoethanolamine = a 1-acyl-sn-glycero-2,3-cyclic phosphate + ethanolamine. Dermonecrotic toxins cleave the phosphodiester linkage between the phosphate and headgroup of certain phospholipids (sphingolipid and lysolipid substrates), forming an alcohol (often choline) and a cyclic phosphate. This toxin acts on sphingomyelin (SM). It may also act on ceramide phosphoethanolamine (CPE), lysophosphatidylcholine (LPC) and lysophosphatidylethanolamine (LPE), but not on lysophosphatidylserine (LPS), and lysophosphatidylglycerol (LPG). It acts by transphosphatidylation, releasing exclusively cyclic phosphate products as second products. Induces dermonecrosis, hemolysis, increased vascular permeability, edema, inflammatory response, and platelet aggregation. In Loxosceles laeta (South American recluse spider), this protein is Dermonecrotic toxin LlSicTox-alphaIV2i.